We begin with the raw amino-acid sequence, 273 residues long: MLPSIAKHVASHQINPLKKHGQNFIFDSSLCDKIVRASHLAENSRVLEIGPGTGGLTRSILQKNPESLTVIETDERFIPLLNEIKEYYPNLNIIKQDALKINLTDLDYDKVTIISNLPYHIGTELVIRWLKEARLITDMTLMLQKEVVERICAMPSTKAYGRLSVICQLIAKVEKCFDVSPTAFYPPPKVYSAIVKLIPLANPPSIALINRVEKITTFAFAGRRKMIKSSLKNLVPNIHEVLTQLKINDNYRAENLAPQDYLRIAMSLSVNKL.

S-adenosyl-L-methionine is bound by residues asparagine 23, isoleucine 25, glycine 50, glutamate 72, aspartate 97, and asparagine 116.

This sequence belongs to the class I-like SAM-binding methyltransferase superfamily. rRNA adenine N(6)-methyltransferase family. RsmA subfamily.

The protein resides in the cytoplasm. The enzyme catalyses adenosine(1518)/adenosine(1519) in 16S rRNA + 4 S-adenosyl-L-methionine = N(6)-dimethyladenosine(1518)/N(6)-dimethyladenosine(1519) in 16S rRNA + 4 S-adenosyl-L-homocysteine + 4 H(+). In terms of biological role, specifically dimethylates two adjacent adenosines (A1518 and A1519) in the loop of a conserved hairpin near the 3'-end of 16S rRNA in the 30S particle. May play a critical role in biogenesis of 30S subunits. The protein is Ribosomal RNA small subunit methyltransferase A of Rickettsia akari (strain Hartford).